The chain runs to 305 residues: Ribonuclease BN (305 aa).

His64, His66, Asp68, His69, His141, Asp212, and His270 together coordinate Zn(2+). The Proton acceptor role is filled by Asp68.

This sequence belongs to the RNase Z family. RNase BN subfamily. As to quaternary structure, homodimer. Requires Zn(2+) as cofactor.

Its function is as follows. Zinc phosphodiesterase, which has both exoribonuclease and endoribonuclease activities. The protein is Ribonuclease BN of Escherichia coli O7:K1 (strain IAI39 / ExPEC).